The chain runs to 150 residues: Molybdopterin synthase catalytic subunit (150 aa).

Residues 35-37, 99-100, Lys115, and 122-124 each bind substrate; these read LAR, HR, and KKE. The tract at residues 124–150 is disordered; sequence EHGPEGPRWIEPTARDRTDAQRWDQEA. The span at 136–150 shows a compositional bias: basic and acidic residues; it reads TARDRTDAQRWDQEA.

The protein belongs to the MoaE family. As to quaternary structure, heterotetramer of 2 MoaD subunits and 2 MoaE subunits. Also stable as homodimer. The enzyme changes between these two forms during catalysis.

The enzyme catalyses 2 [molybdopterin-synthase sulfur-carrier protein]-C-terminal-Gly-aminoethanethioate + cyclic pyranopterin phosphate + H2O = molybdopterin + 2 [molybdopterin-synthase sulfur-carrier protein]-C-terminal Gly-Gly + 2 H(+). It participates in cofactor biosynthesis; molybdopterin biosynthesis. Functionally, converts molybdopterin precursor Z into molybdopterin. This requires the incorporation of two sulfur atoms into precursor Z to generate a dithiolene group. The sulfur is provided by MoaD. This is Molybdopterin synthase catalytic subunit (moaE) from Caulobacter vibrioides (strain ATCC 19089 / CIP 103742 / CB 15) (Caulobacter crescentus).